We begin with the raw amino-acid sequence, 642 residues long: MPVIRFCDGSQQVYKHSVSLREIIENKKPNIIRSLIAISVNNSFSNFNTLITEDSSISFISKKDCEALNIIRYSCIQLLNYAAKKTWPSCKIGESEITKSGFYCDIDFENSITEEDFFILENNMKTLIKREYFISHQNISFDHAYEMFKKKSEIYKIHLIKKYINKKNKISLYYHENYFDIDMGMQVFNIKFCKYFKLQKIGGIYWKGDHKNKMLQRIYGTAWSTKKELDKHLSYINELKKRDHRKIGKLLNLYHMQKESPGMIFWHNNGWIIFNELEIFVREKLKEYKYKEVKTPLLIDKSIWQKSGHWDNYQDAIFTTSSENREYCIKPMNCPGHVQIFNCGLKSYRDLPIRMAEFGSCHRNESSGSLHGLMRIRNFTQDDAHIFCTQEQLRYEINNCIKMIYDLYSTFNFKKILVKFSTRPKKRIGDESVWDQAEKDLSDVLIENNLKFEHQEGEGAFYGPKIEFVLQDSLDRNWQCGTIQLDFYLPIRLRSFYIDEHNHQKIPIIIHRAILGSIERFIGILIEEFSGKLPTWLSPIQVVILSITDSHINYVKKIVQHFSDINIRVESDLRNEKIGFKIREHTLRQIPYILICGEKEIKSKKISVRTRNGYNLGIIDIDCFIKKLQKEIFTRSFYQMEE.

The TGS domain occupies Met-1–Ser-61. Residues Asp-243 to Pro-534 form a catalytic region. The Zn(2+) site is built by Cys-334, His-385, and His-511.

It belongs to the class-II aminoacyl-tRNA synthetase family. In terms of assembly, homodimer. It depends on Zn(2+) as a cofactor.

It localises to the cytoplasm. The catalysed reaction is tRNA(Thr) + L-threonine + ATP = L-threonyl-tRNA(Thr) + AMP + diphosphate + H(+). Functionally, catalyzes the attachment of threonine to tRNA(Thr) in a two-step reaction: L-threonine is first activated by ATP to form Thr-AMP and then transferred to the acceptor end of tRNA(Thr). Also edits incorrectly charged L-seryl-tRNA(Thr). The chain is Threonine--tRNA ligase from Buchnera aphidicola subsp. Schizaphis graminum (strain Sg).